The following is a 493-amino-acid chain: Cytochrome P450 2E1 (493 aa).

298-303 provides a ligand contact to substrate; the sequence is FAGTET. Cys437 contributes to the heme binding site.

Belongs to the cytochrome P450 family. Interacts with chaperones HSP70 and HSP90; this interaction is required for initial targeting to mitochondria. Requires heme as cofactor.

It is found in the endoplasmic reticulum membrane. It localises to the microsome membrane. The protein resides in the mitochondrion inner membrane. The catalysed reaction is an organic molecule + reduced [NADPH--hemoprotein reductase] + O2 = an alcohol + oxidized [NADPH--hemoprotein reductase] + H2O + H(+). It catalyses the reaction (5Z,8Z,11Z)-eicosatrienoate + reduced [NADPH--hemoprotein reductase] + O2 = 19-hydroxy-(5Z,8Z,11Z)-eicosatrienoate + oxidized [NADPH--hemoprotein reductase] + H2O + H(+). The enzyme catalyses (5Z,8Z,11Z,14Z,17Z)-eicosapentaenoate + reduced [NADPH--hemoprotein reductase] + O2 = 19-hydroxy-(5Z,8Z,11Z,14Z,17Z)-eicosapentaenoate + oxidized [NADPH--hemoprotein reductase] + H2O + H(+). It carries out the reaction (4Z,7Z,10Z,13Z,16Z,19Z)-docosahexaenoate + reduced [NADPH--hemoprotein reductase] + O2 = 21-hydroxy-(4Z,7Z,10Z,13Z,16Z,19Z)-docosahexaenoate + oxidized [NADPH--hemoprotein reductase] + H2O + H(+). The catalysed reaction is dodecanoate + reduced [NADPH--hemoprotein reductase] + O2 = 11-hydroxydodecanoate + oxidized [NADPH--hemoprotein reductase] + H2O + H(+). It catalyses the reaction tetradecanoate + reduced [NADPH--hemoprotein reductase] + O2 = 13-hydroxytetradecanoate + oxidized [NADPH--hemoprotein reductase] + H2O + H(+). The enzyme catalyses 4-nitrophenol + NADPH + O2 + H(+) = 4-nitrocatechol + NADP(+) + H2O. It participates in lipid metabolism; fatty acid metabolism. With respect to regulation, the omega-1 hydroxylase activity is stimulated by cytochrome b5. Its function is as follows. A cytochrome P450 monooxygenase involved in the metabolism of fatty acids. Mechanistically, uses molecular oxygen inserting one oxygen atom into a substrate, and reducing the second into a water molecule, with two electrons provided by NADPH via cytochrome P450 reductase (NADPH--hemoprotein reductase). Catalyzes the hydroxylation of carbon-hydrogen bonds. Hydroxylates fatty acids specifically at the omega-1 position displaying the highest catalytic activity for saturated fatty acids. May be involved in the oxidative metabolism of xenobiotics. This Oryctolagus cuniculus (Rabbit) protein is Cytochrome P450 2E1 (CYP2E1).